Here is a 627-residue protein sequence, read N- to C-terminus: (-)-alpha-pinene synthase 2, chloroplastic (627 aa).

The N-terminal 36 residues, 1-36 (MALVSIAPLASKSCLHKSLSSSAHELKTICRTIPTL), are a transit peptide targeting the chloroplast. Residues Asp-378, Asp-382, and Asp-530 each coordinate Mg(2+). Positions 378–382 (DDMYD) match the DDXXD motif motif.

The protein belongs to the terpene synthase family. Tpsd subfamily. Mg(2+) is required as a cofactor. It depends on Mn(2+) as a cofactor.

Its subcellular location is the plastid. It localises to the chloroplast. It carries out the reaction (2E)-geranyl diphosphate = (1S,5S)-beta-pinene + diphosphate. It catalyses the reaction (2E)-geranyl diphosphate = (1S,5S)-alpha-pinene + diphosphate. It participates in terpene metabolism; oleoresin biosynthesis. In terms of biological role, terpene synthase (TPS) involved in the biosynthesis of monoterpene natural products included in conifer oleoresin secretions and volatile emissions; these compounds contribute to biotic and abiotic stress defense against herbivores and pathogens. Catalyzes the conversion of (2E)-geranyl diphosphate (GPP) to (1S,5S)-beta-pinene. This is (-)-alpha-pinene synthase 2, chloroplastic from Picea glauca (White spruce).